Here is an 859-residue protein sequence, read N- to C-terminus: Cadherin-related family member 1 (859 aa).

An N-terminal signal peptide occupies residues 1–21; sequence MRRGPQVALVLGLLCIYLAQA. At 22 to 701 the chain is on the extracellular side; that stretch reads NFAPHFFDNG…LIQTKDNPMK (680 aa). 6 consecutive Cadherin domains span residues 36 to 135, 136 to 247, 248 to 354, 360 to 473, 474 to 577, and 569 to 691; these read NGNM…APRF, LQEP…APIF, VGTP…PPTF, PQNK…VPKF, TSHY…YPQF, and DVND…MAAF. N-linked (GlcNAc...) asparagine glycosylation is found at N58 and N89. Residues N288 and N297 are each glycosylated (N-linked (GlcNAc...) asparagine). Residues 702 to 722 form a helical membrane-spanning segment; sequence AVGVLAGVMAIVVAITVLIST. Residues 723-859 are Cytoplasmic-facing; that stretch reads ATFWRNKKSN…KKSLGNKAYV (137 aa). Residues 789–859 form a disordered region; that stretch reads PPRAPALPPP…KKSLGNKAYV (71 aa). Pro residues predominate over residues 790–800; the sequence is PRAPALPPPPK. Residues 802–816 are compositionally biased toward polar residues; sequence ASSTVAQQTVPTVSG. Residues 817-827 are compositionally biased toward low complexity; it reads SLTPQPSQQLP.

In terms of assembly, interacts with PROM1. Undergoes proteolytic cleavage; produces a soluble 95 kDa N-terminal fragment and a 25 kDa cell-associated C-terminal fragment. As to expression, expressed in the retina. Strongly expressed by the mitral and tufted cells in the main and accessory olfactory bulbs. Also expressed in the septum and olfactory cortex. Weakly expressed in the triangular septal nucleus and piriform cortex.

The protein resides in the cell membrane. Its function is as follows. Potential calcium-dependent cell-adhesion protein. May be required for the structural integrity of the outer segment (OS) of photoreceptor cells. This chain is Cadherin-related family member 1 (Cdhr1), found in Rattus norvegicus (Rat).